Reading from the N-terminus, the 122-residue chain is Small ribosomal subunit protein uS13 (122 aa).

Positions 97 to 122 (PVRGQRTHTNAKTRKGRSRLPIAGKK) are disordered.

Belongs to the universal ribosomal protein uS13 family. In terms of assembly, part of the 30S ribosomal subunit. Forms a loose heterodimer with protein S19. Forms two bridges to the 50S subunit in the 70S ribosome.

Located at the top of the head of the 30S subunit, it contacts several helices of the 16S rRNA. In the 70S ribosome it contacts the 23S rRNA (bridge B1a) and protein L5 of the 50S subunit (bridge B1b), connecting the 2 subunits; these bridges are implicated in subunit movement. Contacts the tRNAs in the A and P-sites. The polypeptide is Small ribosomal subunit protein uS13 (Wolbachia pipientis wMel).